The following is a 561-amino-acid chain: Arginine--tRNA ligase (561 aa).

The 'HIGH' region signature appears at 108 to 118; that stretch reads PNVAKEMHVGH.

It belongs to the class-I aminoacyl-tRNA synthetase family. As to quaternary structure, monomer.

It is found in the cytoplasm. It carries out the reaction tRNA(Arg) + L-arginine + ATP = L-arginyl-tRNA(Arg) + AMP + diphosphate. The protein is Arginine--tRNA ligase of Haemophilus ducreyi (strain 35000HP / ATCC 700724).